Here is a 142-residue protein sequence, read N- to C-terminus: Galactose-binding lectin l-1 (142 aa).

The region spanning 3-134 (FVEVKNLIMK…DATVKNISVN (132 aa)) is the Galectin domain. 68–74 (WQEEQRD) contributes to the a beta-D-galactoside binding site. The N-linked (GlcNAc...) asparagine glycan is linked to Asn-130.

In terms of assembly, homodimer. Post-translationally, the N-terminus is blocked. In terms of tissue distribution, skin; highest expression in that of individuals showing resistance to infectious disease.

The protein localises to the secreted. Involved in host defense at the body surface. Causes agglutination of the Gram-positive bacterium S.difficile. Possesses calcium-independent hemagglutinating activity. In Anguilla japonica (Japanese eel), this protein is Galactose-binding lectin l-1.